A 298-amino-acid polypeptide reads, in one-letter code: 3-sulfolactaldehyde reductase (298 aa).

NAD(+) contacts are provided by residues 11-12, aspartate 31, leucine 65, and threonine 96; that span reads QM. Arginine 123 serves as a coordination point for 2,3-dihydroxypropane-1-sulfonate. The active site involves lysine 171. 174 to 178 is a 2,3-dihydroxypropane-1-sulfonate binding site; that stretch reads NNYMS. Lysine 240 serves as a coordination point for NAD(+).

Belongs to the HIBADH-related family. 3-sulfolactaldehyde reductase subfamily. In terms of assembly, homotetramer. Dimer of dimers.

The catalysed reaction is (2S)-3-sulfopropanediol + NAD(+) = (2S)-3-sulfolactaldehyde + NADH + H(+). It carries out the reaction 4-hydroxybutanoate + NAD(+) = succinate semialdehyde + NADH + H(+). With respect to regulation, inhibited by the NADH analogs tetrahydro-NADH and hexahydro-NADH. In terms of biological role, reduces 3-sulfolactaldehyde (SLA) to 2,3-dihydroxypropane 1-sulfonate (DHPS). Metabolite profiling studies showed that the enzyme also catalyzes in vitro the NADH-dependent reduction of succinic semialdehyde (SSA) to 4-hydroxybutyrate (GHB), and that it could be involved in the metabolism of SSA, and other potentially toxic intermediates that may accumulate under stress conditions. However, the enzyme exhibits a 42,000-fold greater catalytic efficiency for the reduction of SLA over SSA. Shows no detectable activity on the analogous glycolytic intermediate glyceraldehyde-3-phosphate. In Escherichia coli (strain K12), this protein is 3-sulfolactaldehyde reductase (yihU).